Here is a 227-residue protein sequence, read N- to C-terminus: MRHEAPMQMASAQDARYGQKDSSDQNFDYMFKLLIIGNSSVGKTSFLFRYADDSFTSAFVSTVGIDFKVKTVFKNEKRIKLQIWDTAGQERYRTITTAYYRGAMGFILMYDITNEESFNAVQDWSTQIKTYSWDNAQVILVGNKCDMEDERVISTERGQHLGEQLGFEFFETSAKDNINVKQTFERLVDIICDKMSESLETDPAITAAKQNTRLKETPPPPQPNCGC.

Positions 39, 42, 43, 44, 45, 56, 57, 61, and 62 each coordinate GTP. A Mg(2+)-binding site is contributed by Thr-44. Positions 53 to 66 match the Switch 1 motif; that stretch reads DSFTSAFVSTVGID. Residues Thr-62 and Asp-85 each coordinate Mg(2+). Residue Thr-86 is modified to Phosphothreonine. A Switch 2 motif is present at residues 86–104; the sequence is TAGQERYRTITTAYYRGAM. GTP contacts are provided by Gly-88, Asn-143, Lys-144, Asp-146, Ala-174, and Lys-175. 2 positions are modified to phosphoserine: Ser-196 and Ser-198. Position 206 is a phosphothreonine (Thr-206). S-geranylgeranyl cysteine attachment occurs at residues Cys-225 and Cys-227. Cys-227 carries the cysteine methyl ester modification.

This sequence belongs to the small GTPase superfamily. Rab family. In terms of assembly, interacts with RIMS1, RIMS2, RPH3A and RPH3AL. The GTP-bound form interacts with REP15. Interacts with GDI2, CHM and CHML; phosphorylation at Thr-86 disrupts these interactions. Interacts with MADD (via uDENN domain); the GTP-bound form is preferred for interaction. It depends on Mg(2+) as a cofactor. In terms of processing, phosphorylation of Thr-86 in the switch II region by LRRK2 prevents the association of RAB regulatory proteins, including CHM, CHML and RAB GDP dissociation inhibitor GDI2.

The protein localises to the cell membrane. It carries out the reaction GTP + H2O = GDP + phosphate + H(+). With respect to regulation, regulated by guanine nucleotide exchange factors (GEFs) which promote the exchange of bound GDP for free GTP. Regulated by GTPase activating proteins (GAPs) which increase the GTP hydrolysis activity. Inhibited by GDP dissociation inhibitors (GDIs) which prevent Rab-GDP dissociation. The small GTPases Rab are key regulators of intracellular membrane trafficking, from the formation of transport vesicles to their fusion with membranes. Rabs cycle between an inactive GDP-bound form and an active GTP-bound form that is able to recruit to membranes different sets of downstream effectors directly responsible for vesicle formation, movement, tethering and fusion. The protein is Ras-related protein Rab-3C (RAB3C) of Bos taurus (Bovine).